The chain runs to 307 residues: MTRHFLRDDDLSPAEQAEVLDLAVQLKRERWSERPLAGPQTVAVIFDKSSTRTRVSFAVGIADLGGVPLIISTANSQLGGKETASDTARVLERQVAAIVWRTYGQAGLEEMAAGTTVPVVNALSDDFHPCQLLADLLTIREHRGDPAGQTLTFLGDGACNMAQSYLLAGATAGMHVRIAAPAGYVPSEAVVADAERIAASTGGSVRVLTDPVEAVSGADVVVTDTWVSMGREEEKAQRLAELGAYQVTTELMEHAVDDAIFLHCLPADREYEVASEVIDGPRSVVWDEAENRLHAQKALLVWLLRQS.

Carbamoyl phosphate is bound by residues 50 to 53, Gln-77, Arg-101, and 128 to 131; these read STRT and HPCQ. Residues Asn-160, Asp-224, and 228–229 contribute to the L-ornithine site; that span reads SM. Carbamoyl phosphate-binding positions include 264-265 and Arg-292; that span reads CL.

The protein belongs to the aspartate/ornithine carbamoyltransferase superfamily. OTCase family.

Its subcellular location is the cytoplasm. The enzyme catalyses carbamoyl phosphate + L-ornithine = L-citrulline + phosphate + H(+). The protein operates within amino-acid biosynthesis; L-arginine biosynthesis; L-arginine from L-ornithine and carbamoyl phosphate: step 1/3. Reversibly catalyzes the transfer of the carbamoyl group from carbamoyl phosphate (CP) to the N(epsilon) atom of ornithine (ORN) to produce L-citrulline. This is Ornithine carbamoyltransferase from Clavibacter michiganensis subsp. michiganensis (strain NCPPB 382).